A 328-amino-acid polypeptide reads, in one-letter code: Testis-specific serine/threonine-protein kinase 4 (328 aa).

The 269-residue stretch at 25–293 (YEVGKAIGHG…ILDIIKDSWV (269 aa)) folds into the Protein kinase domain. ATP contacts are provided by residues 31–39 (IGHGSYGSV) and K54. The active-site Proton acceptor is D148. T197 carries the phosphothreonine modification.

The protein belongs to the protein kinase superfamily. CAMK Ser/Thr protein kinase family. In terms of assembly, homodimer. Interacts with HSP90; this interaction stabilizes and activates TSSK4. Interacts with ODF2 (via C-terminus); this interaction promotes ODF2 phosphorylation on 'Ser-95'. May interact with CREM. Interacts with CREB1; this interaction facilitates phosphorylation on 'Ser-133'. Interacts with QRICH2. Mg(2+) is required as a cofactor. Post-translationally, activated by autophosphorylation on Thr-197. ODF2 potentiates the autophosphorylation activity of TSSK4 at Thr-197. Ubiquitinated; HSP90 activity negatively regulates ubiquitination and degradation. In terms of tissue distribution, expressed only in the testis.

It is found in the cytoplasmic vesicle. It localises to the secretory vesicle. Its subcellular location is the acrosome. The protein resides in the cell projection. The protein localises to the cilium. It is found in the flagellum. It carries out the reaction L-seryl-[protein] + ATP = O-phospho-L-seryl-[protein] + ADP + H(+). The enzyme catalyses L-threonyl-[protein] + ATP = O-phospho-L-threonyl-[protein] + ADP + H(+). With respect to regulation, activated by phosphorylation on Thr-197. In terms of biological role, serine/threonine kinase which is involved in male germ cell development and in mature sperm function. May be involved in the Cre/Creb signaling pathway. Phosphorylates CREB1 on 'Ser-133' in vitro and can stimulate Cre/Creb pathway in cells. Phosphorylates CREM on 'Ser-116' in vitro. Phosphorylates ODF2 on 'Ser-95'. In Homo sapiens (Human), this protein is Testis-specific serine/threonine-protein kinase 4.